Reading from the N-terminus, the 320-residue chain is o-succinylbenzoate synthase (320 aa).

Residue Lys-133 is the Proton donor of the active site. Positions 161, 190, and 213 each coordinate Mg(2+). Residue Lys-235 is the Proton acceptor of the active site.

This sequence belongs to the mandelate racemase/muconate lactonizing enzyme family. MenC type 1 subfamily. It depends on a divalent metal cation as a cofactor.

The catalysed reaction is (1R,6R)-6-hydroxy-2-succinyl-cyclohexa-2,4-diene-1-carboxylate = 2-succinylbenzoate + H2O. It participates in quinol/quinone metabolism; 1,4-dihydroxy-2-naphthoate biosynthesis; 1,4-dihydroxy-2-naphthoate from chorismate: step 4/7. Its pathway is quinol/quinone metabolism; menaquinone biosynthesis. Its function is as follows. Converts 2-succinyl-6-hydroxy-2,4-cyclohexadiene-1-carboxylate (SHCHC) to 2-succinylbenzoate (OSB). The sequence is that of o-succinylbenzoate synthase from Shigella sonnei (strain Ss046).